A 262-amino-acid polypeptide reads, in one-letter code: Tryptophan synthase alpha chain (262 aa).

Catalysis depends on proton acceptor residues glutamate 52 and aspartate 63.

This sequence belongs to the TrpA family. In terms of assembly, tetramer of two alpha and two beta chains.

The enzyme catalyses (1S,2R)-1-C-(indol-3-yl)glycerol 3-phosphate + L-serine = D-glyceraldehyde 3-phosphate + L-tryptophan + H2O. The protein operates within amino-acid biosynthesis; L-tryptophan biosynthesis; L-tryptophan from chorismate: step 5/5. The alpha subunit is responsible for the aldol cleavage of indoleglycerol phosphate to indole and glyceraldehyde 3-phosphate. The sequence is that of Tryptophan synthase alpha chain from Mycobacteroides abscessus (strain ATCC 19977 / DSM 44196 / CCUG 20993 / CIP 104536 / JCM 13569 / NCTC 13031 / TMC 1543 / L948) (Mycobacterium abscessus).